We begin with the raw amino-acid sequence, 299 residues long: GTPase Era (299 aa).

One can recognise an Era-type G domain in the interval Lys-2–Glu-170. Positions Gly-10–Ser-17 are G1. A GTP-binding site is contributed by Gly-10–Ser-17. The interval Gln-36 to Asn-40 is G2. Positions Asp-57–Gly-60 are G3. GTP contacts are provided by residues Asp-57–Ile-61 and Asn-119–Asp-122. Residues Asn-119–Asp-122 form a G4 region. The interval Thr-149–Ala-151 is G5. The KH type-2 domain occupies Thr-201–Arg-278.

This sequence belongs to the TRAFAC class TrmE-Era-EngA-EngB-Septin-like GTPase superfamily. Era GTPase family. In terms of assembly, monomer.

The protein resides in the cytoplasm. The protein localises to the cell inner membrane. In terms of biological role, an essential GTPase that binds both GDP and GTP, with rapid nucleotide exchange. Plays a role in 16S rRNA processing and 30S ribosomal subunit biogenesis and possibly also in cell cycle regulation and energy metabolism. This chain is GTPase Era, found in Thermosipho melanesiensis (strain DSM 12029 / CIP 104789 / BI429).